The primary structure comprises 426 residues: tRNA (guanine(37)-N(1))-methyltransferase (426 aa).

S-adenosyl-L-methionine contacts are provided by residues H203, 242 to 243 (DL), 269 to 270 (DA), and N292. Residues 374-426 (RISFKMPTLKKRKDTENNDDQENNNNSSNNNNNNKIDYNEAVSSGGEGKKIKH) form a disordered region. Positions 396 to 407 (NNNNSSNNNNNN) are enriched in low complexity.

The protein belongs to the class I-like SAM-binding methyltransferase superfamily. TRM5/TYW2 family. As to quaternary structure, monomer.

It localises to the mitochondrion matrix. The protein localises to the nucleus. Its subcellular location is the cytoplasm. The enzyme catalyses guanosine(37) in tRNA + S-adenosyl-L-methionine = N(1)-methylguanosine(37) in tRNA + S-adenosyl-L-homocysteine + H(+). Functionally, specifically methylates the N1 position of guanosine-37 in various cytoplasmic and mitochondrial tRNAs. Methylation is not dependent on the nature of the nucleoside 5' of the target nucleoside. This is the first step in the biosynthesis of wybutosine (yW), a modified base adjacent to the anticodon of tRNAs and required for accurate decoding. The protein is tRNA (guanine(37)-N(1))-methyltransferase (trmt5) of Heterostelium pallidum (strain ATCC 26659 / Pp 5 / PN500) (Cellular slime mold).